Reading from the N-terminus, the 117-residue chain is UPF0342 protein lwe2240 (117 aa).

The protein belongs to the UPF0342 family.

The sequence is that of UPF0342 protein lwe2240 from Listeria welshimeri serovar 6b (strain ATCC 35897 / DSM 20650 / CCUG 15529 / CIP 8149 / NCTC 11857 / SLCC 5334 / V8).